The primary structure comprises 161 residues: Allophycocyanin alpha chain (161 aa).

Asn-71 carries the post-translational modification N4-methylasparagine. Position 81 (Cys-81) interacts with (2R,3E)-phycocyanobilin.

The protein belongs to the phycobiliprotein family. As to quaternary structure, heterodimer of an alpha and a beta chain. In terms of processing, contains one covalently linked phycocyanobilin chromophore.

It localises to the cellular thylakoid membrane. Functionally, light-harvesting photosynthetic bile pigment-protein from the phycobiliprotein complex. Allophycocyanin has a maximum absorption at approximately 650 nanometers. The polypeptide is Allophycocyanin alpha chain (apcA) (Synechocystis sp. (strain PCC 6714) (Aphanocapsa sp. (strain PCC 6714))).